We begin with the raw amino-acid sequence, 435 residues long: Enolase (435 aa).

Position 163 (glutamine 163) interacts with (2R)-2-phosphoglycerate. Glutamate 205 acts as the Proton donor in catalysis. Mg(2+)-binding residues include aspartate 243, glutamate 292, and aspartate 319. Positions 344, 373, 374, and 395 each coordinate (2R)-2-phosphoglycerate. Lysine 344 acts as the Proton acceptor in catalysis.

Belongs to the enolase family. In terms of assembly, homooctamer, a tetramer of homodimers. The cofactor is Mg(2+).

The protein resides in the cytoplasm. The protein localises to the secreted. It is found in the cell surface. Its subcellular location is the cell wall. It carries out the reaction (2R)-2-phosphoglycerate = phosphoenolpyruvate + H2O. Its pathway is carbohydrate degradation; glycolysis; pyruvate from D-glyceraldehyde 3-phosphate: step 4/5. In terms of biological role, catalyzes the reversible conversion of 2-phosphoglycerate (2-PG) into phosphoenolpyruvate (PEP). It is essential for the degradation of carbohydrates via glycolysis. Its function is as follows. 'Moonlights' as a plasminogen receptor. Binds plasminogen and more weakly plasmin when expressed on the bacterial cell surface; probably has more than one plasmin(ogen) binding site, may bind via Lys residues. Plasminogen binding potentially allows the bacterium to acquire surface-associated proteolytic activity, which in turn contributes to tissue invasion and virulence. The sequence is that of Enolase from Streptococcus pyogenes serotype M6 (strain ATCC BAA-946 / MGAS10394).